The sequence spans 361 residues: Blue-sensitive opsin (361 aa).

Topologically, residues 1–43 (MHPPRPTTDLPEDFYIPMALDAPNITALSPFLVPQTHLGSPGL) are extracellular. Residue asparagine 24 is glycosylated (N-linked (GlcNAc...) asparagine). Residues 44 to 68 (FRAMAAFMFLLIALGVPINTLTIFC) form a helical membrane-spanning segment. At 69–80 (TARFRKLRSHLN) the chain is on the cytoplasmic side. The chain crosses the membrane as a helical span at residues 81–106 (YILVNLALANLLVILVGSTTACYSFS). Residues 107 to 120 (QMYFALGPTACKIE) are Extracellular-facing. Cysteine 117 and cysteine 194 are oxidised to a cystine. Residues 121-140 (GFAATLGGMVSLWSLAVVAF) traverse the membrane as a helical segment. Over 141–159 (ERFLVICKPLGNFTFRGSH) the chain is Cytoplasmic. A helical membrane pass occupies residues 160–183 (AVLGCVATWVLGFVASAPPLFGWS). Residues 184–209 (RYIPEGLQCSCGPDWYTTDNKWHNES) lie on the Extracellular side of the membrane. Residues 210 to 237 (YVLFLFTFCFGVPLAIIVFSYGRLLITL) traverse the membrane as a helical segment. Topologically, residues 238–259 (RAVARQQEQSATTQKADREVTK) are cytoplasmic. A helical transmembrane segment spans residues 260-283 (MVVVMVLGFLVCWAPYTAFALWVV). Residues 284–291 (THRGRSFE) are Extracellular-facing. A helical membrane pass occupies residues 292–316 (VGLASIPSVFSKSSTVYNPVIYVLM). Lysine 303 carries the post-translational modification N6-(retinylidene)lysine. Residues 317-361 (NKQFRSCMLKLLFCGRSPFGDDEDVSGSSQATQVSSVSSSHVAPA) lie on the Cytoplasmic side of the membrane. Residues 338 to 361 (DEDVSGSSQATQVSSVSSSHVAPA) are disordered. The span at 342-361 (SGSSQATQVSSVSSSHVAPA) shows a compositional bias: low complexity.

It belongs to the G-protein coupled receptor 1 family. Opsin subfamily. Phosphorylated on some or all of the serine and threonine residues present in the C-terminal region. In terms of tissue distribution, the color pigments are found in the cone photoreceptor cells.

Its subcellular location is the membrane. Functionally, visual pigments are the light-absorbing molecules that mediate vision. They consist of an apoprotein, opsin, covalently linked to cis-retinal. The protein is Blue-sensitive opsin of Gallus gallus (Chicken).